The sequence spans 119 residues: Large ribosomal subunit protein uL24 (119 aa).

It belongs to the universal ribosomal protein uL24 family. In terms of assembly, part of the 50S ribosomal subunit.

One of two assembly initiator proteins, it binds directly to the 5'-end of the 23S rRNA, where it nucleates assembly of the 50S subunit. Its function is as follows. Located at the polypeptide exit tunnel on the outside of the subunit. This is Large ribosomal subunit protein uL24 from Methanosarcina acetivorans (strain ATCC 35395 / DSM 2834 / JCM 12185 / C2A).